Consider the following 441-residue polypeptide: GTPase Der (441 aa).

EngA-type G domains follow at residues 4 to 169 (PIVA…PEGS) and 178 to 353 (PKVA…DAQT). GTP contacts are provided by residues 10 to 17 (GRPNVGKS), 57 to 61 (DTGGI), 120 to 123 (NKVD), 184 to 191 (GKPNVGKS), 231 to 235 (DTAGL), and 296 to 299 (NKWD). One can recognise a KH-like domain in the interval 354-438 (MRIPTGVLNE…SIRFINRERK (85 aa)).

The protein belongs to the TRAFAC class TrmE-Era-EngA-EngB-Septin-like GTPase superfamily. EngA (Der) GTPase family. In terms of assembly, associates with the 50S ribosomal subunit.

Its function is as follows. GTPase that plays an essential role in the late steps of ribosome biogenesis. This Lachnospira eligens (strain ATCC 27750 / DSM 3376 / VPI C15-48 / C15-B4) (Eubacterium eligens) protein is GTPase Der.